The sequence spans 761 residues: Proton-coupled zinc antiporter SLC30A5 (761 aa).

N-acetylmethionine is present on methionine 1. The Cytoplasmic segment spans residues 1–29; it reads MEEKYGGDARPGPGGGLGPVDVPSARLTR. A helical transmembrane segment spans residues 30–46; it reads YILLLCLTKCLKAVGLF. Over 47–54 the chain is Lumenal; sequence ESYDLLKA. Residues 55 to 75 traverse the membrane as a helical segment; the sequence is VHIVQFIFILKLGTAFFMVLF. Residues 76–96 are Cytoplasmic-facing; the sequence is QKPFSSGKPITKHQWIKIFKH. Residues 97 to 117 traverse the membrane as a helical segment; that stretch reads AVAGCIISLLWFFGLTLCGPL. Position 118 (arginine 118) is a topological domain, lumenal. A helical membrane pass occupies residues 119-139; the sequence is TLLLFEHSDIVVISLLSVLFT. At 140-150 the chain is on the cytoplasmic side; the sequence is SSGGGPAKTRG. The helical transmembrane segment at 151–171 threads the bilayer; sequence AAFFIIAVICLLLFDNDDLMA. The Lumenal portion of the chain corresponds to 172-191; it reads KMAEHPEGHHDSALTHMLYT. Residues 192-212 traverse the membrane as a helical segment; the sequence is AIAFLGVADHKGGVLLLVLAL. The Cytoplasmic segment spans residues 213-236; sequence CCKVGFHTASRKLSIDVGGAKRLQ. Residues 237–257 form a helical membrane-spanning segment; the sequence is ALSQLVSVFLLCPWVIVLSVT. The Lumenal segment spans residues 258–264; sequence TESKVES. A helical transmembrane segment spans residues 265–285; sequence WFSLIMPFTTVIFFVMILDFY. At 286 to 301 the chain is on the cytoplasmic side; that stretch reads MDSVCSVKMDVSKCAR. The chain crosses the membrane as a helical span at residues 302 to 322; the sequence is YGSFPIFISALLFGNFWTHPI. The Lumenal portion of the chain corresponds to 323-340; sequence TDQLRAMNRAAHQESTEH. A helical transmembrane segment spans residues 341–361; that stretch reads VLSGGVVVSAVFFILSANILS. At 362–416 the chain is on the cytoplasmic side; it reads SPSKRGQKGTLIGYSPEGTPLYHFMGDAFQHSSQSVPRFIKDSLKQVLEESDSRQ. The chain crosses the membrane as a helical span at residues 417–437; that stretch reads IFYFLCLNLLFTFVELFYGVL. Positions 418 to 636 are mediates homodimerization with SLC30A6; sequence FYFLCLNLLF…VLIFLSVIPL (219 aa). Topologically, residues 438 to 446 are lumenal; it reads TNSLGLISD. Residues 447–467 form a helical membrane-spanning segment; it reads GFHMLFDCSALVMGLFAALMS. Zn(2+) is bound by residues histidine 449 and aspartate 453. The Cytoplasmic portion of the chain corresponds to 468–481; that stretch reads RWKATRIFSYGYGR. A helical membrane pass occupies residues 482–502; it reads IEILSGFINGLFLIVIAFFVF. Residues 503–518 lie on the Lumenal side of the membrane; it reads MESVARLIDPPELDTN. A helical transmembrane segment spans residues 519–539; that stretch reads MLTPVSVGGLIVNLIGICAFS. A his-rich loop; required for zinc transport region spans residues 540–574; it reads HAHSHGHGASQGNCHSDHGHSHHAHGHGHDHGHSH. Topologically, residues 540–588 are cytoplasmic; it reads HAHSHGHGASQGNCHSDHGHSHHAHGHGHDHGHSHGFTGGGMNANMRGV. The segment at 549-576 is disordered; the sequence is SQGNCHSDHGHSHHAHGHGHDHGHSHGF. A helical transmembrane segment spans residues 589–609; it reads FLHVLADTLGSIGVIVSTVLI. Positions 591 and 595 each coordinate Zn(2+). Residues 610-613 are Lumenal-facing; sequence EQFG. A helical transmembrane segment spans residues 614-634; the sequence is WFIADPLCSLFIAVLIFLSVI. Residues 635-761 lie on the Cytoplasmic side of the membrane; that stretch reads PLIKDACQVL…KYCKDGTYIM (127 aa).

The protein belongs to the cation diffusion facilitator (CDF) transporter (TC 2.A.4) family. SLC30A subfamily. As to quaternary structure, heterodimer with SLC30A6/ZNT6; form a functional zinc ion transmembrane transporter. Could homodimerize through the formation of dityrosine bonds upon oxidative stress. In terms of tissue distribution, ubiquitously expressed.

The protein resides in the golgi apparatus. Its subcellular location is the golgi stack membrane. It is found in the cytoplasmic vesicle. The protein localises to the COPII-coated vesicle membrane. It localises to the secretory vesicle membrane. The protein resides in the trans-Golgi network membrane. The enzyme catalyses Zn(2+)(in) + 2 H(+)(out) = Zn(2+)(out) + 2 H(+)(in). Functionally, together with SLC30A6 forms a functional proton-coupled zinc ion antiporter mediating zinc entry into the lumen of organelles along the secretory pathway. By contributing to zinc ion homeostasis within the early secretory pathway, regulates the activation and folding of enzymes like alkaline phosphatases and enzymes involved in phosphatidylinositol glycan anchor biosynthesis. Through the transport of zinc into secretory granules of pancreatic beta-cells, plays an important role in the storage and secretion of insulin. The sequence is that of Proton-coupled zinc antiporter SLC30A5 from Mus musculus (Mouse).